Consider the following 295-residue polypeptide: Threonine/homoserine exporter RhtA (295 aa).

Topologically, residues 1–9 (MPGSLRKMP) are cytoplasmic. The chain crosses the membrane as a helical span at residues 10–30 (VWLPIVILLVAMASIQGGASL). One can recognise an EamA 1 domain in the interval 30–135 (LAKSLFPLVG…VLAVLGLWFL (106 aa)). At 31–38 (AKSLFPLV) the chain is on the periplasmic side. Residues 39 to 59 (GAPGVTALRLALGTLILIAFF) form a helical membrane-spanning segment. Topologically, residues 60–71 (KPWRLRFAKEQR) are cytoplasmic. The helical transmembrane segment at 72–92 (LPLLFYGVSLGGMNYLFYLSI) threads the bilayer. Position 93 (Gln93) is a topological domain, periplasmic. The chain crosses the membrane as a helical span at residues 94-114 (TVPLGIAVALEFTGPLAVALF). Over 115-118 (SSRR) the chain is Cytoplasmic. The chain crosses the membrane as a helical span at residues 119–139 (PVDFVWVVLAVLGLWFLLPLG). Over 140–146 (QDVSHVD) the chain is Periplasmic. Residues 147-167 (LTGCALALGAGACWAIYILSG) traverse the membrane as a helical segment. Residues 159–278 (CWAIYILSGQ…LGAIIAASMG (120 aa)) form the EamA 2 domain. At 168–175 (QRAGAEHG) the chain is on the cytoplasmic side. The helical transmembrane segment at 176–196 (PATVAIGSLIAALIFVPIGAL) threads the bilayer. Topologically, residues 197 to 200 (QAGE) are periplasmic. Residues 201–221 (ALWHWSVIPLGLAVAILSTAL) form a helical membrane-spanning segment. The Cytoplasmic segment spans residues 222 to 237 (PYSLEMIALTRLPTRT). A helical membrane pass occupies residues 238–258 (FGTLMSMEPALAAVSGMIFLG). The Periplasmic portion of the chain corresponds to 259-262 (ETLT). A helical transmembrane segment spans residues 263–283 (PIQLLALGAIIAASMGSTLTV). Topologically, residues 284–295 (RKESKIKELDIN) are cytoplasmic.

It belongs to the drug/metabolite transporter (DMT) superfamily. 10 TMS drug/metabolite exporter (DME) (TC 2.A.7.3) family.

The protein localises to the cell inner membrane. Functionally, involved in the efflux of threonine and homoserine. This chain is Threonine/homoserine exporter RhtA (rhtA), found in Escherichia coli O157:H7.